The following is a 627-amino-acid chain: uncharacterized protein (627 aa).

7 disordered regions span residues 57 to 82 (EDAM…QGED), 96 to 121 (PEAQ…APPG), 160 to 184 (GCSH…DAAY), 198 to 232 (AQSQ…CPSG), 247 to 277 (SHDA…RGAP), 335 to 358 (RQAG…EAAY), and 449 to 579 (VFDV…PPLS). Residues 169–183 (SSSDQAADAPAGDAA) are compositionally biased toward low complexity. The span at 336 to 357 (QAGAEPAQAPATAPAPEGTEAA) shows a compositional bias: low complexity. The span at 450–464 (FDVKEQGAHADRDAA) shows a compositional bias: basic and acidic residues.

This is an uncharacterized protein from Treponema pallidum (strain Nichols).